Consider the following 484-residue polypeptide: Probable D-lactate dehydrogenase, mitochondrial (484 aa).

Residues 1 to 52 constitute a mitochondrion transit peptide; it reads MAMLLRVATQRLSPWRSFCSRGSQGGLSQDFVEALKAVVGSPHVSTASAVRE. Lys-36 carries the N6-acetyllysine modification. The 181-residue stretch at 62 to 242 folds into the FAD-binding PCMH-type domain; that stretch reads RCQPPDAVVW…TSTTLRLHPA (181 aa). Position 292 is an N6-acetyllysine (Lys-292). N6-acetyllysine; alternate is present on Lys-335. Lys-335 carries the N6-succinyllysine; alternate modification. N6-acetyllysine is present on residues Lys-422 and Lys-449.

The protein belongs to the FAD-binding oxidoreductase/transferase type 4 family. In terms of assembly, interacts with CSRP3. The cofactor is FAD. Readily detected in liver and kidney, with a weaker signal observed in heart, skeletal muscle, stomach, brain, and lung.

The protein resides in the mitochondrion. The catalysed reaction is (R)-lactate + 2 Fe(III)-[cytochrome c] = 2 Fe(II)-[cytochrome c] + pyruvate + 2 H(+). In terms of biological role, involved in D-lactate, but not L-lactate catabolic process. This Mus musculus (Mouse) protein is Probable D-lactate dehydrogenase, mitochondrial.